Consider the following 414-residue polypeptide: Membrane protein UL43 (414 aa).

Transmembrane regions (helical) follow at residues 39–59, 61–81, 96–116, 121–141, 148–168, and 184–204; these read GFAHLWLQAATLGFVGSVVLS, GPYADAMSGAFVIGSTGLGFL, AWLRLVGGGAAVALWSLGEAG, VPGPATQCLALGAAYAALLVL, LFLLAPRPLFVGTLGVVVGGL, and AAALTAAVVAGLGTTAAGDSF. The disordered stretch occupies residues 225-253; the sequence is PRYAPEDAERPTDHGPLLPSTHHQRSPRV. The span at 228 to 237 shows a compositional bias: basic and acidic residues; it reads APEDAERPTD. 2 consecutive transmembrane segments (helical) span residues 339–359 and 383–403; these read GLMFVVPDIAVYAMLGGAVWI and ATLRGLFFSVYALGFAAGVLV.

The protein belongs to the alphaherpesvirinae HHV-1 UL43 family.

It localises to the membrane. In Homo sapiens (Human), this protein is Membrane protein UL43.